The primary structure comprises 178 residues: Large ribosomal subunit protein uL5 (178 aa).

It belongs to the universal ribosomal protein uL5 family. Part of the 50S ribosomal subunit; part of the 5S rRNA/L5/L18/L25 subcomplex. Contacts the 5S rRNA and the P site tRNA. Forms a bridge to the 30S subunit in the 70S ribosome.

In terms of biological role, this is one of the proteins that bind and probably mediate the attachment of the 5S RNA into the large ribosomal subunit, where it forms part of the central protuberance. In the 70S ribosome it contacts protein S13 of the 30S subunit (bridge B1b), connecting the 2 subunits; this bridge is implicated in subunit movement. Contacts the P site tRNA; the 5S rRNA and some of its associated proteins might help stabilize positioning of ribosome-bound tRNAs. The polypeptide is Large ribosomal subunit protein uL5 (Aliivibrio fischeri (strain ATCC 700601 / ES114) (Vibrio fischeri)).